The following is a 623-amino-acid chain: tRNA uridine 5-carboxymethylaminomethyl modification enzyme MnmG (623 aa).

FAD is bound at residue 12–17; the sequence is GAGHAG. 272-286 is a binding site for NAD(+); sequence GPRYCPSIEDKINRF.

Belongs to the MnmG family. As to quaternary structure, homodimer. Heterotetramer of two MnmE and two MnmG subunits. Requires FAD as cofactor.

The protein localises to the cytoplasm. Its function is as follows. NAD-binding protein involved in the addition of a carboxymethylaminomethyl (cmnm) group at the wobble position (U34) of certain tRNAs, forming tRNA-cmnm(5)s(2)U34. This is tRNA uridine 5-carboxymethylaminomethyl modification enzyme MnmG from Flavobacterium johnsoniae (strain ATCC 17061 / DSM 2064 / JCM 8514 / BCRC 14874 / CCUG 350202 / NBRC 14942 / NCIMB 11054 / UW101) (Cytophaga johnsonae).